A 224-amino-acid chain; its full sequence is uncharacterized protein (224 aa).

Positions 2-221 (IEAKNVWKIY…KLRDGEIVEI (220 aa)) constitute an ABC transporter domain. An ATP-binding site is contributed by 38 to 45 (GPSGCGKS).

This sequence belongs to the ABC transporter superfamily.

This is an uncharacterized protein from Methanocaldococcus jannaschii (strain ATCC 43067 / DSM 2661 / JAL-1 / JCM 10045 / NBRC 100440) (Methanococcus jannaschii).